Consider the following 99-residue polypeptide: Malonate decarboxylase acyl carrier protein (99 aa).

The residue at position 25 (Ser25) is an O-(phosphoribosyl dephospho-coenzyme A)serine.

The protein belongs to the MdcC family. In terms of processing, covalently binds the prosthetic group of malonate decarboxylase.

The protein resides in the cytoplasm. Subunit of malonate decarboxylase, it is an acyl carrier protein to which acetyl and malonyl thioester residues are bound via a 2'-(5''-phosphoribosyl)-3'-dephospho-CoA prosthetic group and turn over during the catalytic mechanism. This Pseudomonas syringae pv. tomato (strain ATCC BAA-871 / DC3000) protein is Malonate decarboxylase acyl carrier protein.